The following is a 1534-amino-acid chain: DNA-directed RNA polymerase subunit beta'' (1534 aa).

The Zn(2+) site is built by C220, C296, C303, and C306. Basic and acidic residues-rich tracts occupy residues 644-668 and 678-688; these read RTQE…RTRE and PENKYRTREGE. Disordered stretches follow at residues 644 to 698 and 719 to 800; these read RTQE…EDEY and YRTL…KKEG. Composition is skewed to acidic residues over residues 744–762 and 770–789; these read GEYE…SSED and TLEE…EYGS.

This sequence belongs to the RNA polymerase beta' chain family. RpoC2 subfamily. In plastids the minimal PEP RNA polymerase catalytic core is composed of four subunits: alpha, beta, beta', and beta''. When a (nuclear-encoded) sigma factor is associated with the core the holoenzyme is formed, which can initiate transcription. The cofactor is Zn(2+).

The protein resides in the plastid. It is found in the chloroplast. It catalyses the reaction RNA(n) + a ribonucleoside 5'-triphosphate = RNA(n+1) + diphosphate. DNA-dependent RNA polymerase catalyzes the transcription of DNA into RNA using the four ribonucleoside triphosphates as substrates. This Saccharum hybrid (Sugarcane) protein is DNA-directed RNA polymerase subunit beta''.